We begin with the raw amino-acid sequence, 803 residues long: MAETNLTLLTWAGILCCLIWSGSAQQGGSDCIKANAKSCGECIQAGPNCGWCKKTDFLQEGEPTSARCDDLAALKSKGCPEQDIENPRGSKRVLEDREVTNRKIGAAEKLKPEAITQIQPQKLVLQLRVGEPQTFSLKFKRAEDYPIDLYYLMDLSYSMKDDLENVKSLGTALMREMEKITSDFRIGFGSFVEKTVMPYISTTPAKLRNPCTGDQNCTSPFSYKNVLSLTSEGNKFNELVGKQHISGNLDSPEGGFDAIMQVAVCGDQIGWRNVTRLLVFSTDAGFHFAGDGKLGGIVLPNDGKCHLENNMYTMSHYYDYPSIAHLVQKLSENNIQTIFAVTEEFQAVYKELKNLIPKSAVGTLSSNSSNVIQLIIDAYNSLSSEVILENSKLPKEVTISYKSYCKNGVNDTQEDGRKCSNISIGDEVRFEINVTANECPKKGQNETIKIKPLGFTEEVEIHLQFICDCLCQSEGEPNSPACHDGNGTFECGACRCNEGRIGRLCECSTDEVNSEDMDAYCRRENSTEICSNNGECICGQCVCKKRENTNEVYSGKYCECDNFNCDRSNGLICGGNGICKCRVCECFPNFTGSACDCSLDTTPCMAGNGQICNGRGTCECGTCNCTDPKFQGPTCEMCQTCLGVCAEHKDCVQCRAFEKGEKKETCSQECMHFNMTRVESRGKLPQPVHPDPLSHCKEKDVGDCWFYFTYSVNSNGEASVHVVETPECPSGPDIIPIVAGVVAGIVLIGLALLLIWKLLMIIHDRREFAKFEKEKMNAKWDTGENPIYKSAVTTVVNPKYEGK.

Positions 1–24 (MAETNLTLLTWAGILCCLIWSGSA) are cleaved as a signal peptide. A Blocked amino end (Gln) modification is found at Q25. The Extracellular portion of the chain corresponds to 25–733 (QQGGSDCIKA…ETPECPSGPD (709 aa)). In terms of domain architecture, PSI spans 30 to 80 (DCIKANAKSCGECIQAGPNCGWCKKTDFLQEGEPTSARCDDLAALKSKGCP). 22 disulfide bridges follow: C31/C49, C39/C469, C42/C68, C52/C79, C211/C217, C265/C305, C405/C419, C439/C467, C471/C491, C482/C494, C496/C505, C507/C538, C521/C536, C530/C541, C543/C558, C560/C581, C565/C579, C573/C584, C586/C595, C597/C620, C604/C618, and C612/C623. One can recognise a VWFA domain in the interval 144–382 (DYPIDLYYLM…QLIIDAYNSL (239 aa)). S156 and S158 together coordinate Mg(2+). Ca(2+) is bound by residues S158, D161, D162, and E193. Positions 211 to 217 (CTGDQNC) are CX3CL1-binding. N216 is a glycosylation site (N-linked (GlcNAc...) asparagine). Ca(2+)-binding residues include N248, D250, P252, and E253. Residue E253 participates in Mg(2+) binding. Residue N273 is glycosylated (N-linked (GlcNAc...) asparagine). Residues 299 to 318 (LPNDGKCHLENNMYTMSHYY) form a CX3CL1-binding region. N367, N410, N421, N433, N445, and N486 each carry an N-linked (GlcNAc...) asparagine glycan. The segment at 387 to 470 (ILENSKLPKE…IHLQFICDCL (84 aa)) is interaction with TMEM182. I-EGF domains are found at residues 471–506 (CQSEGEPNSPACHDGNGTFECGACRCNEGRIGRLCE), 507–559 (CSTD…KYCE), 560–596 (CDNFNCDRSNGLICGGNGICKCRVCECFPNFTGSACD), and 597–636 (CSLDTTPCMAGNGQICNGRGTCECGTCNCTDPKFQGPTCE). Residue N525 is glycosylated (N-linked (GlcNAc...) asparagine). A glycan (N-linked (GlcNAc...) asparagine) is linked at N589. Residue N624 is glycosylated (N-linked (GlcNAc...) asparagine). Disulfide bonds link C625/C635, C638/C641, C645/C696, C651/C670, C654/C666, and C704/C728. N674 carries an N-linked (GlcNAc...) asparagine glycan. A helical membrane pass occupies residues 734–756 (IIPIVAGVVAGIVLIGLALLLIW). Residues 757-803 (KLLMIIHDRREFAKFEKEKMNAKWDTGENPIYKSAVTTVVNPKYEGK) lie on the Cytoplasmic side of the membrane. Y788 bears the Phosphotyrosine; by Tyr-kinases mark.

It belongs to the integrin beta chain family. Heterodimer of an alpha and a beta subunit. Beta-1 associates with either alpha-1, alpha-2, alpha-3, alpha-4, alpha-5, alpha-6, alpha-7, alpha-8, alpha-9, alpha-10, alpha-11 or alpha-V. Interacts with TMEM182 and LAMB1. Expressed on surface of embryonic fibroblasts (at protein level).

The protein localises to the cell membrane. It is found in the cell projection. It localises to the invadopodium membrane. Its subcellular location is the ruffle membrane. The protein resides in the melanosome. The protein localises to the lamellipodium. It is found in the ruffle. It localises to the cell junction. Its subcellular location is the focal adhesion. In terms of biological role, integrins alpha-1/beta-1, alpha-2/beta-1, alpha-10/beta-1 and alpha-11/beta-1 are receptors for collagen. Integrins alpha-1/beta-1 and alpha-2/beta-1 recognize the proline-hydroxylated sequence G-F-P-G-E-R in collagen. Integrins alpha-2/beta-1, alpha-3/beta-1, alpha-4/beta-1, alpha-5/beta-1, alpha-8/beta-1, alpha-10/beta-1, alpha-11/beta-1 and alpha-V/beta-1 are receptors for fibronectin. Alpha-4/beta-1 recognizes one or more domains within the alternatively spliced CS-1 and CS-5 regions of fibronectin. Integrin alpha-5/beta-1 is a receptor for fibrinogen. Integrin alpha-1/beta-1, alpha-2/beta-1, alpha-6/beta-1 and alpha-7/beta-1 are receptors for lamimin. Integrin alpha-6/beta-1 (ITGA6:ITGB1) is present in oocytes and is involved in sperm-egg fusion. Integrin alpha-4/beta-1 is a receptor for VCAM1 and recognizes the sequence Q-I-D-S in VCAM1. Integrin alpha-9/beta-1 is a receptor for VCAM1, cytotactin and osteopontin. It recognizes the sequence A-E-I-D-G-I-E-L in cytotactin. Integrin alpha-3/beta-1 is a receptor for epiligrin, thrombospondin and CSPG4. Integrin alpha-3/beta-1 provides a docking site for FAP (seprase) at invadopodia plasma membranes in a collagen-dependent manner and hence may participate in the adhesion, formation of invadopodia and matrix degradation processes, promoting cell invasion. Alpha-3/beta-1 may mediate with LGALS3 the stimulation by CSPG4 of endothelial cells migration. Integrin alpha-V/beta-1 is a receptor for vitronectin. Beta-1 integrins recognize the sequence R-G-D in a wide array of ligands. When associated with alpha-7/beta-1 integrin, regulates cell adhesion and laminin matrix deposition. Involved in promoting endothelial cell motility and angiogenesis. Involved in osteoblast compaction through the fibronectin fibrillogenesis cell-mediated matrix assembly process and the formation of mineralized bone nodules. May be involved in up-regulation of the activity of kinases such as PKC via binding to KRT1. Together with KRT1 and RACK1, serves as a platform for SRC activation or inactivation. ITGA4:ITGB1 binds to fractalkine (CX3CL1) and may act as its coreceptor in CX3CR1-dependent fractalkine signaling. ITGA4:ITGB1 and ITGA5:ITGB1 bind to PLA2G2A via a site (site 2) which is distinct from the classical ligand-binding site (site 1) and this induces integrin conformational changes and enhanced ligand binding to site 1. ITGA5:ITGB1 acts as a receptor for fibrillin-1 (FBN1) and mediates R-G-D-dependent cell adhesion to FBN1. ITGA5:ITGB1 acts as a receptor for fibronectin FN1 and mediates R-G-D-dependent cell adhesion to FN1. ITGA5:ITGB1 is a receptor for IL1B and binding is essential for IL1B signaling. ITGA5:ITGB3 is a receptor for soluble CD40LG and is required for CD40/CD40LG signaling. Plays an important role in myoblast differentiation and fusion during skeletal myogenesis. In Gallus gallus (Chicken), this protein is Integrin beta-1 (ITGB1).